A 418-amino-acid chain; its full sequence is Cell division protein FtsA (418 aa).

This sequence belongs to the FtsA/MreB family. Self-interacts. Interacts with FtsZ.

The protein resides in the cell inner membrane. Its function is as follows. Cell division protein that is involved in the assembly of the Z ring. May serve as a membrane anchor for the Z ring. This chain is Cell division protein FtsA, found in Buchnera aphidicola subsp. Acyrthosiphon pisum (strain APS) (Acyrthosiphon pisum symbiotic bacterium).